Consider the following 166-residue polypeptide: Transcription antitermination protein NusB (166 aa).

Positions 1 to 18 (MISDESDRFNPRDPKPAD) are enriched in basic and acidic residues. Residues 1 to 28 (MISDESDRFNPRDPKPADAGKPSKSAKR) are disordered.

The protein belongs to the NusB family.

In terms of biological role, involved in transcription antitermination. Required for transcription of ribosomal RNA (rRNA) genes. Binds specifically to the boxA antiterminator sequence of the ribosomal RNA (rrn) operons. The chain is Transcription antitermination protein NusB from Pseudomonas putida (strain GB-1).